The chain runs to 335 residues: E3 ubiquitin ligase rnf-121 (335 aa).

At 1–47 the chain is on the cytoplasmic side; it reads MGQHGAIRLQNEVQEGMPPPHELTEEEQWAEEHRKMHEKHKGHEAMH. The helical transmembrane segment at 48 to 68 threads the bilayer; it reads MEMMVIFMISVIVGQIFLVTW. At 69–72 the chain is on the lumenal side; it reads KRKH. A helical transmembrane segment spans residues 73-93; that stretch reads FKSYQMCTLIGMLTIPVYVCF. The Cytoplasmic segment spans residues 94 to 99; that stretch reads NRSWYR. Residues 100 to 120 traverse the membrane as a helical segment; sequence FLATWLVFCIFSAFIWLKASA. Topologically, residues 121–143 are lumenal; it reads QHISGGTPRFVYKWFLFLHKLSY. The helical transmembrane segment at 144 to 164 threads the bilayer; it reads VLGVVGYLIMMGALLGFHVLF. Residues 165 to 168 lie on the Cytoplasmic side of the membrane; the sequence is GVSQ. The chain crosses the membrane as a helical span at residues 169-189; the sequence is PTLMDAGILFMFYGVYYGVLG. Residues 190–335 lie on the Lumenal side of the membrane; the sequence is RDFAHICTAR…QGLTTWMGLE (146 aa). The RING-type; atypical zinc-finger motif lies at 222–284; it reads CAVCGGRLDD…GKLQTCPYCK (63 aa).

The protein belongs to the RNF121 family. In terms of tissue distribution, expressed in body wall muscles, the hypodermis, seam cells, vulval cells, spermathecal cells, uterine cells and the distal tip cell (at protein level).

It is found in the endoplasmic reticulum membrane. It localises to the golgi apparatus membrane. It catalyses the reaction S-ubiquitinyl-[E2 ubiquitin-conjugating enzyme]-L-cysteine + [acceptor protein]-L-lysine = [E2 ubiquitin-conjugating enzyme]-L-cysteine + N(6)-ubiquitinyl-[acceptor protein]-L-lysine.. It participates in protein modification; protein ubiquitination. Functionally, E3 ubiquitin ligase which accepts ubiquitin and transfers it to substrates such as the beta-integrin subunit pat-3, promoting their degradation by the endoplasmic reticulum-associated degradation (ERAD) pathway which is a pathway involved in ubiquitin-dependent degradation of misfolded endoplasmic reticulum proteins. Negatively regulates the unfolded protein response to reduce endoplasmic reticulum stress. Required for the cessation of distal tip cell migration at the end of larval morphogenesis. Plays a role in germline and gonad development. In Caenorhabditis elegans, this protein is E3 ubiquitin ligase rnf-121.